We begin with the raw amino-acid sequence, 333 residues long: MFQDISNFYKDKTILVTGGTGSIGKEIVKTLLKFNPKTIRVLDINETALFELEHELNSEKIRCFIGDVRDKDRLKRAIEEVDVVFHAAALKHVPLCEYNPFEAVKTNVIGTQNLIEVAMDEEVEKFITISTDKAVNPVNVMGATKLLAERLTISANLYKGKRKTAFSVVRFGNVLNSRGSILPLLKEQIKKGGPVTLTHPDMTRFIMSINEAVKLVLKACYLAKGGEIFILKMPSVRIKDLIEVVIEELAPKYGYKPEDIEIKIIGKRPGEKLYEELIIEEEIYNLEELEDMFVVYPYGVDGNKNNKIIYNSKDAKFLNKEKIKKILKEISYL.

It belongs to the polysaccharide synthase family.

This is an uncharacterized protein from Methanocaldococcus jannaschii (strain ATCC 43067 / DSM 2661 / JAL-1 / JCM 10045 / NBRC 100440) (Methanococcus jannaschii).